Here is a 262-residue protein sequence, read N- to C-terminus: Acyl-[acyl-carrier-protein]--UDP-N-acetylglucosamine O-acyltransferase (262 aa).

Belongs to the transferase hexapeptide repeat family. LpxA subfamily. As to quaternary structure, homotrimer.

The protein resides in the cytoplasm. The enzyme catalyses a (3R)-hydroxyacyl-[ACP] + UDP-N-acetyl-alpha-D-glucosamine = a UDP-3-O-[(3R)-3-hydroxyacyl]-N-acetyl-alpha-D-glucosamine + holo-[ACP]. Its pathway is glycolipid biosynthesis; lipid IV(A) biosynthesis; lipid IV(A) from (3R)-3-hydroxytetradecanoyl-[acyl-carrier-protein] and UDP-N-acetyl-alpha-D-glucosamine: step 1/6. Involved in the biosynthesis of lipid A, a phosphorylated glycolipid that anchors the lipopolysaccharide to the outer membrane of the cell. The sequence is that of Acyl-[acyl-carrier-protein]--UDP-N-acetylglucosamine O-acyltransferase from Aliivibrio salmonicida (strain LFI1238) (Vibrio salmonicida (strain LFI1238)).